Here is a 239-residue protein sequence, read N- to C-terminus: MNGPWTEWDHVLKVDPDKPLVDGETFEDVCQTGTDAIEIGGTLDITTEKMQEVVDACSRYDMPLYQEPSNPAVVVESDALDGYLVPTVFNAESAFWVAGAHKEWVRIDGPLDWERTATEAYIVLNPDASVAEVTEANTDQTAEDVAAFATVAERLFGQEIIYIEYSGTFGDTKKVAAAAAALTESTLFYGGGIGGYDSAYEMGAHADTIVVGDLLHDEGVDAVSETVAGVKDAHADGEI.

Lys13 is a binding site for sn-glycerol 1-phosphate. Residues Asp15 and Thr42 each contribute to the Mg(2+) site. Residues 162-167, Gly192, and 212-213 contribute to the sn-glycerol 1-phosphate site; these read YIEYSG and GD.

Belongs to the GGGP/HepGP synthase family. Group I subfamily. Mg(2+) serves as cofactor.

Its subcellular location is the cytoplasm. It carries out the reaction sn-glycerol 1-phosphate + (2E,6E,10E)-geranylgeranyl diphosphate = sn-3-O-(geranylgeranyl)glycerol 1-phosphate + diphosphate. It participates in membrane lipid metabolism; glycerophospholipid metabolism. Its function is as follows. Prenyltransferase that catalyzes the transfer of the geranylgeranyl moiety of geranylgeranyl diphosphate (GGPP) to the C3 hydroxyl of sn-glycerol-1-phosphate (G1P). This reaction is the first ether-bond-formation step in the biosynthesis of archaeal membrane lipids. The sequence is that of Geranylgeranylglyceryl phosphate synthase from Haloquadratum walsbyi (strain DSM 16790 / HBSQ001).